The chain runs to 310 residues: L-lactate dehydrogenase (310 aa).

Residues 10-11, aspartate 32, tyrosine 62, and 76-77 each bind NAD(+); these read MV and GV. Substrate-binding positions include glutamine 79, arginine 85, and 117–120; that span reads NPVD. NAD(+)-binding positions include 115–117 and serine 140; that span reads ATN. Substrate is bound at residue 145 to 148; sequence DTAR. Residues arginine 150 and 162–167 each bind beta-D-fructose 1,6-bisphosphate; that span reads QSVHAY. Histidine 172 functions as the Proton acceptor in the catalytic mechanism. The residue at position 218 (tyrosine 218) is a Phosphotyrosine. Position 227 (threonine 227) interacts with substrate.

Belongs to the LDH/MDH superfamily. LDH family. In terms of assembly, homotetramer.

Its subcellular location is the cytoplasm. It carries out the reaction (S)-lactate + NAD(+) = pyruvate + NADH + H(+). The protein operates within fermentation; pyruvate fermentation to lactate; (S)-lactate from pyruvate: step 1/1. Allosterically activated by fructose 1,6-bisphosphate (FBP). It binds two fructose 1,6-bisphosphate (FBP) molecules per tetramer. Functionally, catalyzes the conversion of lactate to pyruvate. The protein is L-lactate dehydrogenase of Thermus caldophilus.